A 632-amino-acid polypeptide reads, in one-letter code: MHGLLLAGLAAALPLGVAGLPARQQSGLSPRGIDINPYRFASMAKYSEHKATSQMVHSFSYSKDDDYVATATKLVKSTFPNMTFRTVKDHYIGTNGIGHVHFKQTAHGIDIDNADFNVNIGRDGKVFTFGNSFYEGEMPKTNPLTKRDFADPVKALHGAIKTLKLPVKPQSAKAMPMKEAETFMFEGTSGALSEPMAKLVYIQKDGKLHLTWRVETDVGDNWLLSYVDSKETETVHNVVDYVASADYKVFAWGLNDPTEGQPTMIKDPWNTTGSGSPFTWHGDGEMDYTVTRGNNIAAQDNPSGGGQWENNYRPESPELSFVYEYNEQMEPEQFKDFAITQLFYTTNTFHDLLYSFGFTEEAGNFQMNNNGKGGEGNDFAICNAQDGSGTNNANFATPPDGQNGRMRMYTWTTAQPSRDGDLEAGIVIHEYAHGLSNRLCGGPANSNCLSELEAGGMGEGWGDFYATAIRLKQDDTRETDYTMGEWAANMEGGIREYPYSTNMQTNPYTYADVEGMSEVHGIGTVWATILYDVLWNLIDEHGMSKNIMPKFVNGAPSDGRNLAMKLVLDGMTLMPCNPNFVQARDAIIDADQALTNGQNKCALMKAFSKRGLGSNYKHGKNRVNNFDMPADC.

The N-terminal stretch at 1-19 is a signal peptide; the sequence is MHGLLLAGLAAALPLGVAG. A propeptide spanning residues 20–244 is cleaved from the precursor; that stretch reads LPARQQSGLS…VHNVVDYVAS (225 aa). N-linked (GlcNAc...) asparagine glycosylation is present at N270. A Zn(2+)-binding site is contributed by H429. Residue E430 is part of the active site. A Zn(2+)-binding site is contributed by H433.

Belongs to the peptidase M36 family. Requires Zn(2+) as cofactor.

The protein resides in the secreted. Functionally, secreted metalloproteinase probably acting as a virulence factor. The polypeptide is Extracellular metalloproteinase 2 (MEP2) (Arthroderma benhamiae (Trichophyton mentagrophytes)).